The primary structure comprises 381 residues: Spermidine/putrescine import ATP-binding protein PotA (381 aa).

The ABC transporter domain occupies 22-252; the sequence is VELRNVFKFF…PKTSFVADFI (231 aa). 54–61 contributes to the ATP binding site; that stretch reads GPSGCGKT.

It belongs to the ABC transporter superfamily. Spermidine/putrescine importer (TC 3.A.1.11.1) family. In terms of assembly, the complex is composed of two ATP-binding proteins (PotA), two transmembrane proteins (PotB and PotC) and a solute-binding protein (PotD).

Its subcellular location is the cell inner membrane. It catalyses the reaction ATP + H2O + polyamine-[polyamine-binding protein]Side 1 = ADP + phosphate + polyamineSide 2 + [polyamine-binding protein]Side 1.. Its function is as follows. Part of the ABC transporter complex PotABCD involved in spermidine/putrescine import. Responsible for energy coupling to the transport system. This Nostoc sp. (strain PCC 7120 / SAG 25.82 / UTEX 2576) protein is Spermidine/putrescine import ATP-binding protein PotA.